A 206-amino-acid chain; its full sequence is uncharacterized protein (206 aa).

The N-terminal stretch at 1–18 is a signal peptide; that stretch reads MKTYSLLLGLFISFGVLA.

This is an uncharacterized protein from Haemophilus influenzae (strain ATCC 51907 / DSM 11121 / KW20 / Rd).